The chain runs to 295 residues: Tyrosine recombinase XerC (295 aa).

The Core-binding (CB) domain occupies Met1 to Val85. The Tyr recombinase domain occupies Tyr106–Asp285. Catalysis depends on residues Arg145, Lys169, His237, Arg240, and His263. The active-site O-(3'-phospho-DNA)-tyrosine intermediate is Tyr272.

The protein belongs to the 'phage' integrase family. XerC subfamily. As to quaternary structure, forms a cyclic heterotetrameric complex composed of two molecules of XerC and two molecules of XerD.

It is found in the cytoplasm. Its function is as follows. Site-specific tyrosine recombinase, which acts by catalyzing the cutting and rejoining of the recombining DNA molecules. The XerC-XerD complex is essential to convert dimers of the bacterial chromosome into monomers to permit their segregation at cell division. It also contributes to the segregational stability of plasmids. This Actinobacillus succinogenes (strain ATCC 55618 / DSM 22257 / CCUG 43843 / 130Z) protein is Tyrosine recombinase XerC.